A 467-amino-acid polypeptide reads, in one-letter code: MKQIITRFPPSPTGHLHIGGARTALFNWLYARHTGGRFILRIEDTDVERSTTQSAEGIIKSLEWLGIDWDEGPYFQSRRMEVYAEYIQRLLASGHAYYCTCSPERLKERRERALAEGRNPTYDGTCREKALPPSDDAVVRFRTPDTGKTVLDDRVKGGIAFDNAEIGDFIIQRSDQTPTYNFAVVVDDITMGINTIIRGDDHVTNTPRQILMYRALDSELPLFAHVPMVLGRDRSRLSKRHGAMSVLEYRDTGYLPDGLINALVRLGWSHGDQEFFTRKELIELFSLEHIGTSAGVFDPDKLLAINAEHIKKSDPAALAPHLLPLLKEKGYAAENNDYLHNAIHTLLLRSKTLKEMADKAAFYYEDPLSYDPAATAKFLVPENMEILEMLAEKLATLDSLTEKDQEPAFTAVMEKTGKKFGKIAQPVRVALTGRTESPGIFETIEALGRRKTLERLADAVEMIKKST.

The 'HIGH' region signature appears at 10-20 (PSPTGHLHIGG). 4 residues coordinate Zn(2+): C99, C101, C126, and E128. The 'KMSKS' region motif lies at 236 to 240 (RLSKR). K239 contributes to the ATP binding site.

The protein belongs to the class-I aminoacyl-tRNA synthetase family. Glutamate--tRNA ligase type 1 subfamily. As to quaternary structure, monomer. Zn(2+) serves as cofactor.

The protein resides in the cytoplasm. The enzyme catalyses tRNA(Glu) + L-glutamate + ATP = L-glutamyl-tRNA(Glu) + AMP + diphosphate. Catalyzes the attachment of glutamate to tRNA(Glu) in a two-step reaction: glutamate is first activated by ATP to form Glu-AMP and then transferred to the acceptor end of tRNA(Glu). This is Glutamate--tRNA ligase from Desulfosudis oleivorans (strain DSM 6200 / JCM 39069 / Hxd3) (Desulfococcus oleovorans).